The primary structure comprises 160 residues: Endoribonuclease YbeY (160 aa).

3 residues coordinate Zn(2+): His-124, His-128, and His-134.

This sequence belongs to the endoribonuclease YbeY family. Requires Zn(2+) as cofactor.

The protein resides in the cytoplasm. In terms of biological role, single strand-specific metallo-endoribonuclease involved in late-stage 70S ribosome quality control and in maturation of the 3' terminus of the 16S rRNA. This Jannaschia sp. (strain CCS1) protein is Endoribonuclease YbeY.